Consider the following 344-residue polypeptide: Dihydroorotase (344 aa).

Histidine 13 and histidine 15 together coordinate Zn(2+). Substrate contacts are provided by residues 15–17 (HLR) and asparagine 41. Residues lysine 99, histidine 136, and histidine 174 each contribute to the Zn(2+) site. Position 99 is an N6-carboxylysine (lysine 99). Residue histidine 136 coordinates substrate. Leucine 219 is a substrate binding site. Aspartate 247 provides a ligand contact to Zn(2+). The active site involves aspartate 247. 2 residues coordinate substrate: histidine 251 and alanine 263.

Belongs to the metallo-dependent hydrolases superfamily. DHOase family. Class II DHOase subfamily. Homodimer. It depends on Zn(2+) as a cofactor.

The enzyme catalyses (S)-dihydroorotate + H2O = N-carbamoyl-L-aspartate + H(+). The protein operates within pyrimidine metabolism; UMP biosynthesis via de novo pathway; (S)-dihydroorotate from bicarbonate: step 3/3. In terms of biological role, catalyzes the reversible cyclization of carbamoyl aspartate to dihydroorotate. The protein is Dihydroorotase of Idiomarina loihiensis (strain ATCC BAA-735 / DSM 15497 / L2-TR).